A 396-amino-acid chain; its full sequence is S-adenosylmethionine decarboxylase proenzyme (396 aa).

Active-site residues include E29 and E32. S88 acts as the Schiff-base intermediate with substrate; via pyruvic acid in catalysis. S88 is subject to Pyruvic acid (Ser); by autocatalysis. The active-site Proton donor; for catalytic activity is the C102. Residues S287 and H301 each act as proton acceptor; for processing activity in the active site.

The protein belongs to the eukaryotic AdoMetDC family. Pyruvate is required as a cofactor. Post-translationally, is synthesized initially as an inactive proenzyme. Formation of the active enzyme involves a self-maturation process in which the active site pyruvoyl group is generated from an internal serine residue via an autocatalytic post-translational modification. Two non-identical subunits are generated from the proenzyme in this reaction, and the pyruvate is formed at the N-terminus of the alpha chain, which is derived from the carboxyl end of the proenzyme. The post-translation cleavage follows an unusual pathway, termed non-hydrolytic serinolysis, in which the side chain hydroxyl group of the serine supplies its oxygen atom to form the C-terminus of the beta chain, while the remainder of the serine residue undergoes an oxidative deamination to produce ammonia and the pyruvoyl group blocking the N-terminus of the alpha chain.

It carries out the reaction S-adenosyl-L-methionine + H(+) = S-adenosyl 3-(methylsulfanyl)propylamine + CO2. The protein operates within amine and polyamine biosynthesis; S-adenosylmethioninamine biosynthesis; S-adenosylmethioninamine from S-adenosyl-L-methionine: step 1/1. Catalyzes the decarboxylation of S-adenosylmethionine, a key step in the biosynthetic pathway for spermidine and spermine. It is essential for normal growth, sporulation, and maintenance of ds-RNA virus. The chain is S-adenosylmethionine decarboxylase proenzyme (SPE2) from Saccharomyces cerevisiae (strain ATCC 204508 / S288c) (Baker's yeast).